The chain runs to 78 residues: UPF0270 protein PC1_3850 (78 aa).

The protein belongs to the UPF0270 family.

The chain is UPF0270 protein PC1_3850 from Pectobacterium carotovorum subsp. carotovorum (strain PC1).